A 510-amino-acid polypeptide reads, in one-letter code: Monocarboxylate transporter 14 (510 aa).

Residues 1–27 are Cytoplasmic-facing; it reads MYTSHEDIGYDFEDGPKDKKTLKPHPN. 6 helical membrane-spanning segments follow: residues 28–48, 74–94, 103–123, 127–147, 159–179, and 191–209; these read IDGG…ILIM, WVSS…GLFI, AIIG…AANV, FITF…PAVV, LAQG…TVLL, and AMLI…GALM. The interval 214–255 is disordered; the sequence is PGKNPNDPGEKDVRGLPAHSTESVKSTGQQGRTEEKDGGLGN. The span at 233-244 shows a compositional bias: polar residues; the sequence is STESVKSTGQQG. 6 consecutive transmembrane segments (helical) span residues 315-335, 353-373, 379-399, 408-428, 443-463, and 474-494; these read MFVA…IPFI, FPLT…LGVI, ISVW…IFIL, LAVI…MPVV, GIII…AGWI, and FYIC…QPCI. At 495–510 the chain is on the cytoplasmic side; sequence RIIEQSRRKYMDGAHV.

This sequence belongs to the major facilitator superfamily. Monocarboxylate porter (TC 2.A.1.13) family.

The protein localises to the cell membrane. Its function is as follows. Proton-linked monocarboxylate transporter. May catalyze the transport of monocarboxylates across the plasma membrane. The sequence is that of Monocarboxylate transporter 14 (SLC16A14) from Homo sapiens (Human).